The primary structure comprises 443 residues: Glutamyl-tRNA reductase (443 aa).

Residues 49 to 52 (TCNR), Ser109, 114 to 116 (ETQ), and Gln120 contribute to the substrate site. Cys50 functions as the Nucleophile in the catalytic mechanism. 189–194 (GAGKMS) serves as a coordination point for NADP(+).

Belongs to the glutamyl-tRNA reductase family. As to quaternary structure, homodimer.

The catalysed reaction is (S)-4-amino-5-oxopentanoate + tRNA(Glu) + NADP(+) = L-glutamyl-tRNA(Glu) + NADPH + H(+). The protein operates within porphyrin-containing compound metabolism; protoporphyrin-IX biosynthesis; 5-aminolevulinate from L-glutamyl-tRNA(Glu): step 1/2. Functionally, catalyzes the NADPH-dependent reduction of glutamyl-tRNA(Glu) to glutamate 1-semialdehyde (GSA). The sequence is that of Glutamyl-tRNA reductase from Heliobacterium mobile (Heliobacillus mobilis).